The following is a 196-amino-acid chain: MKPLVVFVLGGPGAGKGTQCARIVEKYGYTHLSAGELLRDERKNPDSQYGELIEKYIKEGKIVPVEITISLLKREMDQTMAANAQKNKFLIDGFPRNQDNLQGWNKTMDGKADVSFVLFFDCNNEICIERCLERGKSSGRSDDNRESLEKRIQTYLQSTKPIIDLYEEMGKVKKIDASKSVDEVFDEVVQIFDKEG.

ATP is bound at residue 13 to 18; that stretch reads GAGKGT. Serine 33 carries the post-translational modification Phosphoserine. Residues 33-63 are NMP; sequence SAGELLRDERKNPDSQYGELIEKYIKEGKIV. Position 39 (arginine 39) interacts with a ribonucleoside 5'-phosphate. An N6-acetyllysine mark is found at lysine 43 and lysine 55. 61–63 lines the a ribonucleoside 5'-phosphate pocket; the sequence is KIV. Lysine 73 participates in a covalent cross-link: Glycyl lysine isopeptide (Lys-Gly) (interchain with G-Cter in SUMO2). 93 to 96 lines the a ribonucleoside 5'-phosphate pocket; sequence GFPR. Asparagine 100 is a binding site for CMP. Lysine 106 is subject to N6-succinyllysine. An LID region spans residues 133 to 143; the sequence is ERGKSSGRSDD. Arginine 134 lines the ATP pocket. Residues arginine 140 and arginine 151 each coordinate a ribonucleoside 5'-phosphate. Residue lysine 179 coordinates ATP. A Phosphoserine modification is found at serine 180.

The protein belongs to the adenylate kinase family. UMP-CMP kinase subfamily. Monomer. It depends on Mg(2+) as a cofactor. In terms of tissue distribution, ubiquitously expressed.

The protein localises to the nucleus. It localises to the cytoplasm. The catalysed reaction is CMP + ATP = CDP + ADP. It carries out the reaction dCMP + ATP = dCDP + ADP. The enzyme catalyses UMP + ATP = UDP + ADP. It catalyses the reaction a 2'-deoxyribonucleoside 5'-diphosphate + ATP = a 2'-deoxyribonucleoside 5'-triphosphate + ADP. The catalysed reaction is a ribonucleoside 5'-diphosphate + ATP = a ribonucleoside 5'-triphosphate + ADP. In terms of biological role, catalyzes the phosphorylation of pyrimidine nucleoside monophosphates at the expense of ATP. Plays an important role in de novo pyrimidine nucleotide biosynthesis. Has preference for UMP and CMP as phosphate acceptors. Also displays broad nucleoside diphosphate kinase activity. The chain is UMP-CMP kinase from Homo sapiens (Human).